Reading from the N-terminus, the 556-residue chain is MKNDIEIAQSAKMEPIINIAKKIGLEEDDIELYGKYKCKISLDVIKRLENNKDGKLVLVTAINPTPAGEGKSTVTVGLGQALNKIGKNTVIALREPSLGPVFGIKGGAAGGGYAQVVPMEDINLHFTGDMHAITSANNLLCAAIDNHIHQGNLLRIDSRRIVFKRVMDMNDRALRNIVVGMGGKINGFLREDGFMITVASEIMAILCMASDLEDLKERMGNILIAYNLDGEPVYAKELEIEGAMALLMKDAIKPNLVQTLENTPAIIHGGPFANIAHGCNSIIATKTALKMSDITITEAGFGADLGAEKFLDIKCRYGNLNPDCVVLVATIRALKHHGGVKKDELNISNVDALNKGMKNLEKQIENIKAYGVPVVVAINKFITDSDEEVKAIEDFCKNIGVEVSLTEVWEKGGEGGIDLANKVIKTMENEPSNFKMIYDSEESIKDKILKIVQTIYGGKGVNYTPQALKQIAEIEKFNLDKLPICMAKTQYSLSDNPSLLGRPENFDITIKEVRVSNGAGFIVVLTGDVMTMPGLPKVPAANRMDIKDNGEIVGLF.

65-72 (TPAGEGKS) contributes to the ATP binding site.

This sequence belongs to the formate--tetrahydrofolate ligase family.

It catalyses the reaction (6S)-5,6,7,8-tetrahydrofolate + formate + ATP = (6R)-10-formyltetrahydrofolate + ADP + phosphate. It participates in one-carbon metabolism; tetrahydrofolate interconversion. The polypeptide is Formate--tetrahydrofolate ligase (Clostridium perfringens (strain SM101 / Type A)).